The chain runs to 226 residues: Probable functional amyloid protease FapD (226 aa).

The signal sequence occupies residues 1-18 (MRRATLCLLLLLAGPSWA). The Peptidase C39 domain maps to 50–180 (QKTDFSCGAA…AGWNGIVFAV (131 aa)). The active site involves Cys-56.

Belongs to the FapD family.

Its subcellular location is the periplasm. Its function is as follows. Probable cysteine protease that is involved in processing fibril precursors. Upon overexpression of the endogenous six-gene locus (fapA-fapF) in situ, cells form large clumps during liquid growth, make large amounts of biofilm and produce amyloid fibrils. Expression of the 6 gene operon in E.coli strain BL21(DE3) induces flocculation and biofilm formation with copious extracellular fibrils. The sequence is that of Probable functional amyloid protease FapD from Pseudomonas fluorescens.